The chain runs to 502 residues: ATP synthase subunit alpha (502 aa).

169-176 contacts ATP; the sequence is GDRQTGKT.

Belongs to the ATPase alpha/beta chains family. In terms of assembly, F-type ATPases have 2 components, CF(1) - the catalytic core - and CF(0) - the membrane proton channel. CF(1) has five subunits: alpha(3), beta(3), gamma(1), delta(1), epsilon(1). CF(0) has three main subunits: a(1), b(2) and c(9-12). The alpha and beta chains form an alternating ring which encloses part of the gamma chain. CF(1) is attached to CF(0) by a central stalk formed by the gamma and epsilon chains, while a peripheral stalk is formed by the delta and b chains.

It localises to the cell membrane. It carries out the reaction ATP + H2O + 4 H(+)(in) = ADP + phosphate + 5 H(+)(out). Its function is as follows. Produces ATP from ADP in the presence of a proton gradient across the membrane. The alpha chain is a regulatory subunit. This is ATP synthase subunit alpha from Streptococcus pyogenes serotype M18 (strain MGAS8232).